A 347-amino-acid polypeptide reads, in one-letter code: Heat-inducible transcription repressor HrcA (347 aa).

The protein belongs to the HrcA family.

Functionally, negative regulator of class I heat shock genes (grpE-dnaK-dnaJ and groELS operons). Prevents heat-shock induction of these operons. This Rhodococcus erythropolis (strain PR4 / NBRC 100887) protein is Heat-inducible transcription repressor HrcA.